We begin with the raw amino-acid sequence, 62 residues long: MNNNEPDTLPDPAIGYIFQNDIVALKQAFSLPDIDYADISQREQLAAALKRWPLLAEFAQQK.

The protein is Protein YhjR (yhjR) of Escherichia coli (strain K12).